We begin with the raw amino-acid sequence, 544 residues long: Phenylalanine--tRNA ligase beta subunit (544 aa).

The region spanning 268–343 (LIHKIQNVRE…MSIGYNNLEP (76 aa)) is the B5 domain. Residues Asp-321, Asp-327, Glu-330, and Asp-331 each contribute to the Mg(2+) site.

Belongs to the phenylalanyl-tRNA synthetase beta subunit family. Type 2 subfamily. Tetramer of two alpha and two beta subunits. Requires Mg(2+) as cofactor.

The protein resides in the cytoplasm. The catalysed reaction is tRNA(Phe) + L-phenylalanine + ATP = L-phenylalanyl-tRNA(Phe) + AMP + diphosphate + H(+). The sequence is that of Phenylalanine--tRNA ligase beta subunit from Saccharolobus solfataricus (strain ATCC 35092 / DSM 1617 / JCM 11322 / P2) (Sulfolobus solfataricus).